The primary structure comprises 307 residues: Elongation factor Ts (307 aa).

Positions 80 to 83 (TDFV) are involved in Mg(2+) ion dislocation from EF-Tu.

It belongs to the EF-Ts family.

It localises to the cytoplasm. Functionally, associates with the EF-Tu.GDP complex and induces the exchange of GDP to GTP. It remains bound to the aminoacyl-tRNA.EF-Tu.GTP complex up to the GTP hydrolysis stage on the ribosome. The chain is Elongation factor Ts from Albidiferax ferrireducens (strain ATCC BAA-621 / DSM 15236 / T118) (Rhodoferax ferrireducens).